The chain runs to 402 residues: Renin (402 aa).

Positions 1-26 (MGGRRMPLWALLLLWTSCSFSLPTDT) are cleaved as a signal peptide. The propeptide at 27-64 (ASFGRILLKKMPSVREILEERGVDMTRISAEWGEFIKK) is activation peptide. The N-linked (GlcNAc...) asparagine glycan is linked to Asn-69. Residues 84–399 (YYGEIGIGTP…DRHNNRIGFA (316 aa)) enclose the Peptidase A1 domain. Asp-102 is an active-site residue. Residues Cys-115 and Cys-122 are joined by a disulfide bond. N-linked (GlcNAc...) asparagine glycosylation is present at Asn-139. An intrachain disulfide couples Cys-278 to Cys-282. Asp-287 is an active-site residue. Asn-320 carries N-linked (GlcNAc...) asparagine glycosylation. Cys-321 and Cys-358 are oxidised to a cystine.

The protein belongs to the peptidase A1 family. As to quaternary structure, interacts with ATP6AP2.

Its subcellular location is the secreted. The protein localises to the membrane. It carries out the reaction Cleavage of Leu-|-Xaa bond in angiotensinogen to generate angiotensin I.. Its activity is regulated as follows. Interaction with ATP6AP2 results in a 5-fold increased efficiency in angiotensinogen processing. In terms of biological role, renin is a highly specific endopeptidase, whose only known function is to generate angiotensin I from angiotensinogen in the plasma, initiating a cascade of reactions that produce an elevation of blood pressure and increased sodium retention by the kidney. This Rattus norvegicus (Rat) protein is Renin (Ren1).